Here is an 890-residue protein sequence, read N- to C-terminus: Alanine--tRNA ligase (890 aa).

Positions 572, 576, 674, and 678 each coordinate Zn(2+).

It belongs to the class-II aminoacyl-tRNA synthetase family. It depends on Zn(2+) as a cofactor.

It localises to the cytoplasm. It catalyses the reaction tRNA(Ala) + L-alanine + ATP = L-alanyl-tRNA(Ala) + AMP + diphosphate. Functionally, catalyzes the attachment of alanine to tRNA(Ala) in a two-step reaction: alanine is first activated by ATP to form Ala-AMP and then transferred to the acceptor end of tRNA(Ala). Also edits incorrectly charged Ser-tRNA(Ala) and Gly-tRNA(Ala) via its editing domain. The sequence is that of Alanine--tRNA ligase from Prochlorococcus marinus (strain MIT 9211).